The following is a 442-amino-acid chain: UDP-glycosyltransferase 78D4 (442 aa).

UDP-alpha-D-glucose is bound by residues 322–324 (APQ), 339–347 (HGGWNSVLE), and 361–364 (FGDH).

Belongs to the UDP-glycosyltransferase family.

This Arabidopsis thaliana (Mouse-ear cress) protein is UDP-glycosyltransferase 78D4 (UGT78D4).